Consider the following 141-residue polypeptide: Nucleoside triphosphatase NudI (141 aa).

The Nudix hydrolase domain occupies 1–141; sequence MRQRTIVCPL…RKTLRLKGLL (141 aa). The Nudix box signature appears at 38-59; that stretch reads GGVEPGERIEEALRREIREELG.

The protein belongs to the Nudix hydrolase family. NudI subfamily. As to quaternary structure, monomer. Requires Mg(2+) as cofactor.

It catalyses the reaction a ribonucleoside 5'-triphosphate + H2O = a ribonucleoside 5'-phosphate + diphosphate + H(+). The catalysed reaction is a 2'-deoxyribonucleoside 5'-triphosphate + H2O = a 2'-deoxyribonucleoside 5'-phosphate + diphosphate + H(+). It carries out the reaction dUTP + H2O = dUMP + diphosphate + H(+). The enzyme catalyses dTTP + H2O = dTMP + diphosphate + H(+). It catalyses the reaction dCTP + H2O = dCMP + diphosphate + H(+). In terms of biological role, catalyzes the hydrolysis of nucleoside triphosphates, with a preference for pyrimidine deoxynucleoside triphosphates (dUTP, dTTP and dCTP). The chain is Nucleoside triphosphatase NudI from Escherichia coli O9:H4 (strain HS).